Reading from the N-terminus, the 313-residue chain is Homoserine O-acetyltransferase (313 aa).

C142 (acyl-thioester intermediate) is an active-site residue. Positions 163 and 191 each coordinate substrate. The active-site Proton acceptor is the H234. Residue E236 is part of the active site. R248 is a binding site for substrate.

The protein belongs to the MetA family.

The protein localises to the cytoplasm. The catalysed reaction is L-homoserine + acetyl-CoA = O-acetyl-L-homoserine + CoA. It participates in amino-acid biosynthesis; L-methionine biosynthesis via de novo pathway; O-acetyl-L-homoserine from L-homoserine: step 1/1. In terms of biological role, transfers an acetyl group from acetyl-CoA to L-homoserine, forming acetyl-L-homoserine. The chain is Homoserine O-acetyltransferase from Streptococcus gordonii (strain Challis / ATCC 35105 / BCRC 15272 / CH1 / DL1 / V288).